Here is a 367-residue protein sequence, read N- to C-terminus: tRNA-specific 2-thiouridylase MnmA (367 aa).

ATP contacts are provided by residues 9–16 (GLSGGVDS) and Met35. The interaction with target base in tRNA stretch occupies residues 95–97 (NPD). Cys100 acts as the Nucleophile in catalysis. A disulfide bridge links Cys100 with Cys196. Gly124 is a binding site for ATP. The segment at 146-148 (KDQ) is interaction with tRNA. Cys196 (cysteine persulfide intermediate) is an active-site residue. Residues 308 to 309 (RY) are interaction with tRNA.

This sequence belongs to the MnmA/TRMU family.

The protein resides in the cytoplasm. It carries out the reaction S-sulfanyl-L-cysteinyl-[protein] + uridine(34) in tRNA + AH2 + ATP = 2-thiouridine(34) in tRNA + L-cysteinyl-[protein] + A + AMP + diphosphate + H(+). Functionally, catalyzes the 2-thiolation of uridine at the wobble position (U34) of tRNA, leading to the formation of s(2)U34. This chain is tRNA-specific 2-thiouridylase MnmA, found in Nitrosococcus oceani (strain ATCC 19707 / BCRC 17464 / JCM 30415 / NCIMB 11848 / C-107).